We begin with the raw amino-acid sequence, 84 residues long: Putative defensin-like protein 63 (84 aa).

Positions 1 to 21 (MDIRKTYVIIFFVGILTISFS) are cleaved as a signal peptide. Intrachain disulfides connect Cys40-Cys81, Cys44-Cys67, Cys53-Cys79, and Cys57-Cys80.

Belongs to the DEFL family.

The protein localises to the secreted. The chain is Putative defensin-like protein 63 from Arabidopsis thaliana (Mouse-ear cress).